The primary structure comprises 587 residues: Phosphatidate phosphatase APP1 (587 aa).

Disordered stretches follow at residues 1–28 (MNSQ…RMGK) and 150–178 (PPHL…SENR). Composition is skewed to low complexity over residues 9–22 (SSSS…PTSG) and 163–174 (SQSSIESSLSSK). Positions 281–285 (DIDDT) match the DXDXT motif motif. The segment at 452–521 (QQRPMQMTKS…NRQLPNLDAN (70 aa)) is disordered. The interaction with SH3 domain of ABP1 stretch occupies residues 467-483 (RRPPPPPIPSTQKPSLT).

In terms of assembly, monomer. Interacts with ABP1. Requires Mg(2+) as cofactor. N-glycosylated.

Its subcellular location is the cytoplasm. It is found in the cytoskeleton. The protein resides in the actin patch. The enzyme catalyses a 1,2-diacyl-sn-glycero-3-phosphate + H2O = a 1,2-diacyl-sn-glycerol + phosphate. The catalysed reaction is 1,2-di-(9Z-octadecenoyl)-sn-glycero-3-phosphate + H2O = 1,2-di-(9Z-octadecenoyl)-sn-glycerol + phosphate. Its activity is regulated as follows. Inhibited by N-ethylmaleimide. Its function is as follows. Mg(2+)-dependent phosphatidate (PA) phosphatase which catalyzes the dephosphorylation of PA to yield diacylglycerol. May play a role in vesicular trafficking through its PAP activity at cortical actin patches. Can also utilize diacylglycerol pyrophosphate and lyso-PA as substrates with specificity constants 4- and 7-fold lower, respectively, when compared with PA. This chain is Phosphatidate phosphatase APP1 (APP1), found in Saccharomyces cerevisiae (strain ATCC 204508 / S288c) (Baker's yeast).